The sequence spans 825 residues: Protein SEY1 homolog 2 (825 aa).

A disordered region spans residues 1-21; sequence MDEVSPTKHFTSKPLLPTKTP. The Cytoplasmic segment spans residues 1–728; sequence MDEVSPTKHF…EKENSEIKYQ (728 aa). The GB1/RHD3-type G domain maps to 83-305; that stretch reads GMDYNAVGIL…FLPQYNKEIP (223 aa). Residue 93–100 participates in GTP binding; the sequence is GAQSSGKS. The stretch at 373-397 forms a coiled coil; it reads KVFTKQIDAALERYKEVTERYMETI. A helical transmembrane segment spans residues 729-749; the sequence is IPLYLIVLVVFFGFDEFIAIL. At 750–752 the chain is on the lumenal side; that stretch reads TNP. A helical membrane pass occupies residues 753 to 773; the sequence is LLFILTLIIGGGVYIGYKLNL. The Cytoplasmic segment spans residues 774-825; the sequence is GGVAKNYIQYLLSMSLSSTMEYLRTIPFFTPLIDKVWPKDDNNTEETQEEIK.

This sequence belongs to the TRAFAC class dynamin-like GTPase superfamily. GB1/RHD3 GTPase family. RHD3 subfamily.

It is found in the endoplasmic reticulum membrane. Functionally, probable GTP-binding protein that may be involved in cell development. This is Protein SEY1 homolog 2 from Entamoeba histolytica (strain ATCC 30459 / HM-1:IMSS / ABRM).